The following is a 382-amino-acid chain: D-galactonate dehydratase (382 aa).

Aspartate 183 provides a ligand contact to Mg(2+). Histidine 185 (proton donor) is an active-site residue. Mg(2+) contacts are provided by glutamate 209 and glutamate 235. Histidine 285 serves as the catalytic Proton acceptor.

This sequence belongs to the mandelate racemase/muconate lactonizing enzyme family. GalD subfamily. Mg(2+) serves as cofactor.

The catalysed reaction is D-galactonate = 2-dehydro-3-deoxy-D-galactonate + H2O. The protein operates within carbohydrate acid metabolism; D-galactonate degradation; D-glyceraldehyde 3-phosphate and pyruvate from D-galactonate: step 1/3. Its function is as follows. Catalyzes the dehydration of D-galactonate to 2-keto-3-deoxy-D-galactonate. In Verminephrobacter eiseniae (strain EF01-2), this protein is D-galactonate dehydratase.